Here is a 487-residue protein sequence, read N- to C-terminus: MESAALSRIGLAGLAVMGQNLALNIAEKGFPISVYNRTTSKVDETLDRAAVEGNLPVSGQYSPRDFVLSIQRPRSLIILVKAGAPVDQTIDAFSEYMEPGDCIIDGGNEWYQNTERRISEAEQKGLLYLGMGVSGGEEGARNGPSLMPGGSFQAYDNIKDILEKVAAQVEDGPCVTYIGEGGSGNFVKMVHNGIEYGDMQLISEAYDVLKNVGGLSNEELAEIFTEWNSGELESFLVEITSDIFRVKDEFGDGELVDKILDKTGMKGTGKWTVQQAAELSVAAPTIAASLDCRYLSGLKDERENAAKVLREAGLKEEIGSASSGIDKKRLVDDVRQALYASKICSYAQGMNLLRAKSLEKSWNLNFGELARIWKGGCIIRAVFLDRIKKAYQRNPDLASLVVDPEFAKEMVQRQAAWRRVVGLAVSAGISTPGMCASLAYFDTYRRARLPANLVQAQRDLFGAHTYERTDRPGAYHTEWTKLARKNH.

Position 1 is an N-acetylmethionine (Met-1). NADP(+) is bound by residues 13–18 (GLAVMG), 36–38 (NRT), 80–82 (VKA), and Asn-108. Substrate-binding positions include Asn-108 and 134–136 (SGG). The active-site Proton acceptor is Lys-188. 191-192 (HN) contacts substrate. The active-site Proton donor is Glu-195. Residues Tyr-196, Lys-266, Arg-293, Arg-458, and His-464 each contribute to the substrate site.

It belongs to the 6-phosphogluconate dehydrogenase family. Forms homodimer. Forms heterodimers with PGD2 or PGD3.

It localises to the plastid. It is found in the chloroplast. Its subcellular location is the cytoplasm. The protein localises to the cytosol. The catalysed reaction is 6-phospho-D-gluconate + NADP(+) = D-ribulose 5-phosphate + CO2 + NADPH. Its pathway is carbohydrate degradation; pentose phosphate pathway; D-ribulose 5-phosphate from D-glucose 6-phosphate (oxidative stage): step 3/3. Catalyzes the oxidative decarboxylation of 6-phosphogluconate to ribulose 5-phosphate and CO(2), with concomitant reduction of NADP to NADPH. The chain is 6-phosphogluconate dehydrogenase, decarboxylating 1, chloroplastic from Arabidopsis thaliana (Mouse-ear cress).